We begin with the raw amino-acid sequence, 313 residues long: Porphobilinogen deaminase (313 aa).

At Cys242 the chain carries S-(dipyrrolylmethanemethyl)cysteine.

Belongs to the HMBS family. In terms of assembly, monomer. It depends on dipyrromethane as a cofactor.

It carries out the reaction 4 porphobilinogen + H2O = hydroxymethylbilane + 4 NH4(+). Its pathway is porphyrin-containing compound metabolism; protoporphyrin-IX biosynthesis; coproporphyrinogen-III from 5-aminolevulinate: step 2/4. Its function is as follows. Tetrapolymerization of the monopyrrole PBG into the hydroxymethylbilane pre-uroporphyrinogen in several discrete steps. The sequence is that of Porphobilinogen deaminase from Pseudomonas syringae pv. syringae (strain B728a).